The primary structure comprises 352 residues: Rhodopsin, deep-sea form (352 aa).

Topologically, residues 1–36 are extracellular; that stretch reads MNGTEGPNFYIPMSNITGVVRSPFEYPQYYLAEPWA. Residues Asn2 and Asn15 are each glycosylated (N-linked (GlcNAc...) asparagine). Residues 37–61 traverse the membrane as a helical segment; it reads YTILAAYMFTLILLGFPVNFLTLYV. Topologically, residues 62 to 73 are cytoplasmic; that stretch reads TIEHKKLRTPLN. The helical transmembrane segment at 74 to 98 threads the bilayer; the sequence is YILLNLAVANLFMVFGGFTTTVYTS. The Extracellular segment spans residues 99 to 113; that stretch reads MHGYFVFGETGCNLE. A disulfide bridge connects residues Cys110 and Cys187. Residues 114–133 form a helical membrane-spanning segment; that stretch reads GYFATLGGEISLWSLVVLAI. Residues 134-152 lie on the Cytoplasmic side of the membrane; it reads ERWVVVCKPMSNFRFGENH. A helical membrane pass occupies residues 153 to 176; it reads AIMGLAFTWIMANSCAMPPLFGWS. Topologically, residues 177–202 are extracellular; that stretch reads RYIPEGMQCSCGVDYYTLKPEVNNES. Asn200 carries N-linked (GlcNAc...) asparagine glycosylation. Residues 203-230 form a helical membrane-spanning segment; it reads FVIYMFIVHFSVPLTIISFCYGRLVCTV. The Cytoplasmic segment spans residues 231–252; sequence KEAAAQQQESETTQRAEREVTR. The chain crosses the membrane as a helical span at residues 253 to 276; the sequence is MVVIMVIAFLVCWVPYASVAWYIF. Topologically, residues 277–284 are extracellular; sequence THQGSTFG. A helical membrane pass occupies residues 285–309; the sequence is PVFMTVPSFFAKSSAIYNPLIYICL. Residue Lys296 is modified to N6-(retinylidene)lysine. The Cytoplasmic segment spans residues 310–352; the sequence is NSQFRNCMITTLFCGKNPFQEEEGASTTASKTEASSVSSVSPA. A lipid anchor (S-palmitoyl cysteine) is attached at Cys323. Positions 333–352 are disordered; sequence GASTTASKTEASSVSSVSPA. Low complexity predominate over residues 334 to 352; the sequence is ASTTASKTEASSVSSVSPA.

This sequence belongs to the G-protein coupled receptor 1 family. Opsin subfamily. In terms of processing, phosphorylated on some or all of the serine and threonine residues present in the C-terminal region. In terms of tissue distribution, rod shaped photoreceptor cells which mediates vision in dim light.

It is found in the membrane. Functionally, visual pigments such as rhodopsin and porphyropsin are light-absorbing molecules that mediate vision. Rhodopsin consists of an apoprotein, opsin, covalently linked to 11-cis-retinal. This receptor is coupled to the activation of phospholipase C. Porphyropsin consists of opsin covalently linked to 11-cis 3,4-didehydroretinal. The polypeptide is Rhodopsin, deep-sea form (Anguilla anguilla (European freshwater eel)).